Reading from the N-terminus, the 124-residue chain is Snaclec rhodocetin subunit delta (124 aa).

3 cysteine pairs are disulfide-bonded: Cys1/Cys12, Cys29/Cys120, and Cys95/Cys112. Residues 8–121 (YNGYCYRVFS…CEKTVSFVCK (114 aa)) enclose the C-type lectin domain.

Belongs to the snaclec family. As to quaternary structure, heterotetramer of subunit alpha, beta, gamma and delta; only the gamma and the delta subunits are disulfide-linked. Alpha-beta heterodimer and gamma-delta heterodimer associate orthogonally, giving a cruciform conformation. This heterotetramer may covalently dimerizes thanks to the gamma subunit. In terms of tissue distribution, expressed by the venom gland.

It is found in the secreted. Potent inhibitor of collagen-induced platelet aggregation. It acts by binding to the integrin alpha2A domain and blocks collagen binding to integrin alpha-2/beta-1 (ITGA2/ITGB1). The gamma/delta subunits mainly contribute to this activity. The protein is Snaclec rhodocetin subunit delta of Calloselasma rhodostoma (Malayan pit viper).